Reading from the N-terminus, the 389-residue chain is Succinate--CoA ligase [ADP-forming] subunit beta (389 aa).

An ATP-grasp domain is found at 9-244; the sequence is KQLLAEYGIP…KTQEDETEVT (236 aa). ATP is bound by residues lysine 46, 53–55, glycine 102, and glutamate 107; that span reads GRG. The Mg(2+) site is built by asparagine 199 and aspartate 213. Residues asparagine 264 and 321–323 each bind substrate; that span reads GIV.

Belongs to the succinate/malate CoA ligase beta subunit family. In terms of assembly, heterotetramer of two alpha and two beta subunits. It depends on Mg(2+) as a cofactor.

The catalysed reaction is succinate + ATP + CoA = succinyl-CoA + ADP + phosphate. It carries out the reaction GTP + succinate + CoA = succinyl-CoA + GDP + phosphate. It participates in carbohydrate metabolism; tricarboxylic acid cycle; succinate from succinyl-CoA (ligase route): step 1/1. Its function is as follows. Succinyl-CoA synthetase functions in the citric acid cycle (TCA), coupling the hydrolysis of succinyl-CoA to the synthesis of either ATP or GTP and thus represents the only step of substrate-level phosphorylation in the TCA. The beta subunit provides nucleotide specificity of the enzyme and binds the substrate succinate, while the binding sites for coenzyme A and phosphate are found in the alpha subunit. The sequence is that of Succinate--CoA ligase [ADP-forming] subunit beta from Xanthomonas euvesicatoria pv. vesicatoria (strain 85-10) (Xanthomonas campestris pv. vesicatoria).